Reading from the N-terminus, the 342-residue chain is Serpentine receptor class delta-33 (342 aa).

A run of 7 helical transmembrane segments spans residues 26 to 46 (IFVI…LLLL), 62 to 82 (IFLA…VTSM), 112 to 132 (YVGI…SMIY), 148 to 168 (IILC…CSNI), 205 to 225 (LIIL…VMYW), 261 to 281 (IIPL…QLGF), and 287 to 307 (YSYF…VVTI).

The protein belongs to the nematode receptor-like protein srd family.

The protein resides in the membrane. This is Serpentine receptor class delta-33 (srd-33) from Caenorhabditis elegans.